The chain runs to 236 residues: uncharacterized protein (236 aa).

The protein resides in the virion. This is an uncharacterized protein from Acanthamoeba polyphaga (Amoeba).